Here is a 98-residue protein sequence, read N- to C-terminus: NADH-ubiquinone oxidoreductase chain 4L (98 aa).

The next 3 membrane-spanning stretches (helical) occupy residues 1–21 (MPPIYINIILAYTASLVGLLM), 29–49 (SLLCLEGMMLSLFILATILSL), and 61–81 (IILLIFAGCETAVGLALLVMI).

This sequence belongs to the complex I subunit 4L family. As to quaternary structure, core subunit of respiratory chain NADH dehydrogenase (Complex I) which is composed of 45 different subunits.

The protein resides in the mitochondrion inner membrane. It carries out the reaction a ubiquinone + NADH + 5 H(+)(in) = a ubiquinol + NAD(+) + 4 H(+)(out). Core subunit of the mitochondrial membrane respiratory chain NADH dehydrogenase (Complex I) which catalyzes electron transfer from NADH through the respiratory chain, using ubiquinone as an electron acceptor. Part of the enzyme membrane arm which is embedded in the lipid bilayer and involved in proton translocation. The sequence is that of NADH-ubiquinone oxidoreductase chain 4L (MT-ND4L) from Galeopterus variegatus (Malayan flying lemur).